A 61-amino-acid chain; its full sequence is Photosystem II reaction center protein K (61 aa).

Residues 1 to 24 (MINIFSFICIYLHSALYSSSFFFG) constitute a propeptide that is removed on maturation. Residues 40-60 (MPVIPLFFFLLAFVWQAAVSF) traverse the membrane as a helical segment.

It belongs to the PsbK family. As to quaternary structure, PSII is composed of 1 copy each of membrane proteins PsbA, PsbB, PsbC, PsbD, PsbE, PsbF, PsbH, PsbI, PsbJ, PsbK, PsbL, PsbM, PsbT, PsbX, PsbY, PsbZ, Psb30/Ycf12, at least 3 peripheral proteins of the oxygen-evolving complex and a large number of cofactors. It forms dimeric complexes.

It localises to the plastid. The protein resides in the chloroplast thylakoid membrane. Functionally, one of the components of the core complex of photosystem II (PSII). PSII is a light-driven water:plastoquinone oxidoreductase that uses light energy to abstract electrons from H(2)O, generating O(2) and a proton gradient subsequently used for ATP formation. It consists of a core antenna complex that captures photons, and an electron transfer chain that converts photonic excitation into a charge separation. In Pelargonium hortorum (Common geranium), this protein is Photosystem II reaction center protein K.